Here is a 66-residue protein sequence, read N- to C-terminus: MIKKYAITPNVDADGWFIEVENVAPTALYTSKDAAIEKAKQVAKENSPSKLVIYDQFKNVEEEHSF.

This is an uncharacterized protein from Bacillus subtilis (strain 168).